Here is a 96-residue protein sequence, read N- to C-terminus: MAIIEVGRICVKLSGREAGSKCVIVDIIDNNFVLVTGPKSISGVKRRRVNISHLEPTDKTVEIGKGASDQEVEAKLKEQGLVDFMKEKVKVKIPVI.

This sequence belongs to the eukaryotic ribosomal protein eL14 family.

The chain is Large ribosomal subunit protein eL14 from Metallosphaera sedula (strain ATCC 51363 / DSM 5348 / JCM 9185 / NBRC 15509 / TH2).